The following is a 440-amino-acid chain: Diaminopimelate decarboxylase (440 aa).

Residue Lys-61 is modified to N6-(pyridoxal phosphate)lysine. Residues Gly-234 and 275–278 (EPGR) contribute to the pyridoxal 5'-phosphate site. The substrate site is built by Arg-278, Arg-314, and Tyr-318. The active-site Proton donor is the Cys-348. Substrate is bound by residues Glu-349 and Tyr-384. Residue Tyr-384 coordinates pyridoxal 5'-phosphate. A compositionally biased stretch (low complexity) spans 421–431 (LAPELEPGPAL). The segment at 421–440 (LAPELEPGPALSPRPSRDPR) is disordered.

Belongs to the Orn/Lys/Arg decarboxylase class-II family. LysA subfamily. In terms of assembly, homodimer. Requires pyridoxal 5'-phosphate as cofactor.

The enzyme catalyses meso-2,6-diaminopimelate + H(+) = L-lysine + CO2. Its pathway is amino-acid biosynthesis; L-lysine biosynthesis via DAP pathway; L-lysine from DL-2,6-diaminopimelate: step 1/1. In terms of biological role, specifically catalyzes the decarboxylation of meso-diaminopimelate (meso-DAP) to L-lysine. This chain is Diaminopimelate decarboxylase, found in Streptomyces coelicolor (strain ATCC BAA-471 / A3(2) / M145).